The sequence spans 465 residues: UDP-N-acetylmuramate--L-alanine ligase (465 aa).

118–124 (GTHGKTT) serves as a coordination point for ATP.

The protein belongs to the MurCDEF family.

Its subcellular location is the cytoplasm. It catalyses the reaction UDP-N-acetyl-alpha-D-muramate + L-alanine + ATP = UDP-N-acetyl-alpha-D-muramoyl-L-alanine + ADP + phosphate + H(+). Its pathway is cell wall biogenesis; peptidoglycan biosynthesis. Its function is as follows. Cell wall formation. In Ruegeria pomeroyi (strain ATCC 700808 / DSM 15171 / DSS-3) (Silicibacter pomeroyi), this protein is UDP-N-acetylmuramate--L-alanine ligase.